A 290-amino-acid chain; its full sequence is Phosphoribulokinase 1 (290 aa).

12 to 20 lines the ATP pocket; that stretch reads GSSGAGTST.

It belongs to the phosphoribulokinase family. As to quaternary structure, homooctamer.

It catalyses the reaction D-ribulose 5-phosphate + ATP = D-ribulose 1,5-bisphosphate + ADP + H(+). Its pathway is carbohydrate biosynthesis; Calvin cycle. Its activity is regulated as follows. Activated by NADH and inhibited by phosphoenolpyruvate. This Cereibacter sphaeroides (Rhodobacter sphaeroides) protein is Phosphoribulokinase 1 (prkA).